Consider the following 131-residue polypeptide: Classical arabinogalactan protein 1 (131 aa).

Residues 1–22 form the signal peptide; the sequence is MAFSKSLVFVLLAALLISSAVA. A disordered region spans residues 22-110; the sequence is AQSPAPAPSN…APGPAQGGAV (89 aa). Residues 50–60 show a composition bias toward pro residues; that stretch reads APAPEVSPSPS. The segment covering 61–72 has biased composition (low complexity); the sequence is PAAALTPESSAS. A lipid anchor (GPI-anchor amidated glycine) is attached at Gly108. Residues 109–131 constitute a propeptide, removed in mature form; it reads AVSNKFASFGSVAVMLTAAVLVI.

Belongs to the classical AGP family. O-glycosylated on the hydroxyproline residues. Predominantly expressed in flowers and at a lower level in roots and leaves.

It localises to the cell membrane. Its function is as follows. Proteoglycan that seems to be implicated in diverse developmental roles such as differentiation, cell-cell recognition, embryogenesis and programmed cell death. This Arabidopsis thaliana (Mouse-ear cress) protein is Classical arabinogalactan protein 1 (AGP1).